Consider the following 556-residue polypeptide: Urocanate hydratase (556 aa).

Residues 52 to 53, Gln-130, 176 to 178, Glu-196, Arg-201, 242 to 243, 263 to 267, 273 to 274, and Tyr-322 each bind NAD(+); these read GG, GMG, NA, QTSAH, and YL. Residue Cys-410 is part of the active site. Gly-492 is an NAD(+) binding site.

The protein belongs to the urocanase family. NAD(+) serves as cofactor.

The protein resides in the cytoplasm. It carries out the reaction 4-imidazolone-5-propanoate = trans-urocanate + H2O. It functions in the pathway amino-acid degradation; L-histidine degradation into L-glutamate; N-formimidoyl-L-glutamate from L-histidine: step 2/3. Functionally, catalyzes the conversion of urocanate to 4-imidazolone-5-propionate. The polypeptide is Urocanate hydratase (Shewanella sp. (strain MR-7)).